The primary structure comprises 280 residues: Orotidine 5'-phosphate decarboxylase (280 aa).

Residues Asp40, 62–64, 93–102, Tyr228, and Arg246 each bind substrate; these read KTH and DRKFVDIGNT. The active-site Proton donor is the Lys95.

The protein belongs to the OMP decarboxylase family.

The catalysed reaction is orotidine 5'-phosphate + H(+) = UMP + CO2. Its pathway is pyrimidine metabolism; UMP biosynthesis via de novo pathway; UMP from orotate: step 2/2. The polypeptide is Orotidine 5'-phosphate decarboxylase (PYRG) (Solorina crocea).